Consider the following 162-residue polypeptide: ATP synthase subunit b (162 aa).

A helical membrane pass occupies residues 6–28 (LVTFVLTIVNILVLFYLLKRFLF).

It belongs to the ATPase B chain family. F-type ATPases have 2 components, F(1) - the catalytic core - and F(0) - the membrane proton channel. F(1) has five subunits: alpha(3), beta(3), gamma(1), delta(1), epsilon(1). F(0) has three main subunits: a(1), b(2) and c(10-14). The alpha and beta chains form an alternating ring which encloses part of the gamma chain. F(1) is attached to F(0) by a central stalk formed by the gamma and epsilon chains, while a peripheral stalk is formed by the delta and b chains.

The protein resides in the cell membrane. Its function is as follows. F(1)F(0) ATP synthase produces ATP from ADP in the presence of a proton or sodium gradient. F-type ATPases consist of two structural domains, F(1) containing the extramembraneous catalytic core and F(0) containing the membrane proton channel, linked together by a central stalk and a peripheral stalk. During catalysis, ATP synthesis in the catalytic domain of F(1) is coupled via a rotary mechanism of the central stalk subunits to proton translocation. Functionally, component of the F(0) channel, it forms part of the peripheral stalk, linking F(1) to F(0). The chain is ATP synthase subunit b from Natranaerobius thermophilus (strain ATCC BAA-1301 / DSM 18059 / JW/NM-WN-LF).